A 198-amino-acid chain; its full sequence is Ribonuclease HII (198 aa).

The RNase H type-2 domain occupies 11–198; sequence NLIAGVDEVG…GPVKRVLGLV (188 aa). Positions 17, 18, and 109 each coordinate a divalent metal cation.

The protein belongs to the RNase HII family. Requires Mn(2+) as cofactor. Mg(2+) is required as a cofactor.

The protein resides in the cytoplasm. The enzyme catalyses Endonucleolytic cleavage to 5'-phosphomonoester.. In terms of biological role, endonuclease that specifically degrades the RNA of RNA-DNA hybrids. The sequence is that of Ribonuclease HII from Yersinia enterocolitica serotype O:8 / biotype 1B (strain NCTC 13174 / 8081).